The chain runs to 288 residues: Glycine--tRNA ligase alpha subunit (288 aa).

It belongs to the class-II aminoacyl-tRNA synthetase family. Tetramer of two alpha and two beta subunits.

It localises to the cytoplasm. It carries out the reaction tRNA(Gly) + glycine + ATP = glycyl-tRNA(Gly) + AMP + diphosphate. The polypeptide is Glycine--tRNA ligase alpha subunit (Rickettsia rickettsii (strain Iowa)).